We begin with the raw amino-acid sequence, 84 residues long: Large ribosomal subunit protein bL27 (84 aa).

A disordered region spans residues 1–21 (MAHKKGQGSTRNGRDSHSKRL). Residues 12 to 21 (NGRDSHSKRL) show a composition bias toward basic and acidic residues.

The protein belongs to the bacterial ribosomal protein bL27 family.

The chain is Large ribosomal subunit protein bL27 from Methylacidiphilum infernorum (isolate V4) (Methylokorus infernorum (strain V4)).